Here is a 254-residue protein sequence, read N- to C-terminus: 5-oxoprolinase subunit A (254 aa).

The protein belongs to the LamB/PxpA family. Forms a complex composed of PxpA, PxpB and PxpC.

It catalyses the reaction 5-oxo-L-proline + ATP + 2 H2O = L-glutamate + ADP + phosphate + H(+). Catalyzes the cleavage of 5-oxoproline to form L-glutamate coupled to the hydrolysis of ATP to ADP and inorganic phosphate. The sequence is that of 5-oxoprolinase subunit A from Rhodopseudomonas palustris (strain ATCC BAA-98 / CGA009).